A 317-amino-acid polypeptide reads, in one-letter code: Acetyl-coenzyme A carboxylase carboxyl transferase subunit alpha (317 aa).

The CoA carboxyltransferase C-terminal domain maps to 40 to 293 (LEGRVRDAMM…GTVIADALKE (254 aa)).

It belongs to the AccA family. As to quaternary structure, acetyl-CoA carboxylase is a heterohexamer composed of biotin carboxyl carrier protein (AccB), biotin carboxylase (AccC) and two subunits each of ACCase subunit alpha (AccA) and ACCase subunit beta (AccD).

It is found in the cytoplasm. The catalysed reaction is N(6)-carboxybiotinyl-L-lysyl-[protein] + acetyl-CoA = N(6)-biotinyl-L-lysyl-[protein] + malonyl-CoA. The protein operates within lipid metabolism; malonyl-CoA biosynthesis; malonyl-CoA from acetyl-CoA: step 1/1. Component of the acetyl coenzyme A carboxylase (ACC) complex. First, biotin carboxylase catalyzes the carboxylation of biotin on its carrier protein (BCCP) and then the CO(2) group is transferred by the carboxyltransferase to acetyl-CoA to form malonyl-CoA. The chain is Acetyl-coenzyme A carboxylase carboxyl transferase subunit alpha from Sinorhizobium fredii (strain NBRC 101917 / NGR234).